Reading from the N-terminus, the 307-residue chain is Cyclin-dependent kinase 5 activator 1 (307 aa).

Gly2 is lipidated: N-myristoyl glycine. Ser8 is modified (phosphoserine; by CDK5). A disordered region spans residues 97 to 135; that stretch reads TFAQPPPAQPPAPPASQLSGSQTGVSSSVKKAPHPAVSS. Positions 100 to 110 are enriched in pro residues; that stretch reads QPPPAQPPAPP. Residues 112–125 show a composition bias toward polar residues; sequence SQLSGSQTGVSSSV. Thr138 is subject to Phosphothreonine; by CDK5.

It belongs to the cyclin-dependent kinase 5 activator family. As to quaternary structure, heterodimer composed of a catalytic subunit CDK5 and a regulatory subunit CDK5R1 (p25) and macromolecular complex composed of at least CDK5, CDK5R1 (p35) and CDK5RAP1 or CDK5RAP2 or CDK5RAP3. Only the heterodimer shows kinase activity. Interacts with EPHA4 and NGEF; may mediate the activation of NGEF by EPHA4. Interacts with RASGRF2. The complex p35/CDK5 interacts with CLOCK. In terms of processing, the p35 form is proteolytically cleaved by calpain, giving rise to the p25 form. P35 has a 5 to 10 fold shorter half-life compared to p25. The conversion results in deregulation of the CDK5 kinase: p25/CDK5 kinase displays an increased and altered tau phosphorylation in comparison to the p35/CDK5 kinase in vivo. Post-translationally, myristoylated. A proper myristoylation signal is essential for the proper distribution of p35. Phosphorylation at Ser-8 and Thr-138 by CDK5 prevents calpain-mediated proteolysis. In terms of processing, ubiquitinated, leading to its degradation: degradation of p35 by proteasome results in down-regulation of CDK5 activity. During this process, CDK5 phosphorylates p35 and induces its ubiquitination and subsequent degradation. Ubiquitinated by the CRL2(FEM1B) complex, which recognizes the -Gly-Leu-Asp-Arg C-degron at the C-terminus, leading to its degradation. In terms of tissue distribution, brain and neuron specific.

It localises to the cell membrane. It is found in the cell projection. The protein localises to the neuron projection. Its subcellular location is the nucleus. The protein resides in the cytoplasm. It localises to the perinuclear region. It is found in the perikaryon. Its function is as follows. p35 is a neuron specific activator of CDK5. The complex p35/CDK5 is required for neurite outgrowth and cortical lamination. Involved in dendritic spine morphogenesis by mediating the EFNA1-EPHA4 signaling. Activator of TPKII. The complex p35/CDK5 participates in the regulation of the circadian clock by modulating the function of CLOCK protein: phosphorylates CLOCK at 'Thr-451' and 'Thr-461' and regulates the transcriptional activity of the CLOCK-BMAL1 heterodimer in association with altered stability and subcellular distribution. This chain is Cyclin-dependent kinase 5 activator 1 (CDK5R1), found in Bos taurus (Bovine).